Here is a 200-residue protein sequence, read N- to C-terminus: Putative AgrB-like protein (200 aa).

The next 5 helical transmembrane spans lie at 49–69 (LIIT…LVFM), 88–108 (LLCT…IQFT), 114–134 (LFRF…SPAV), 148–168 (ALKH…FLVS), and 171–191 (LGTI…PLKG).

This sequence belongs to the AgrB family.

The protein resides in the cell membrane. Functionally, may be involved in the proteolytic processing of a quorum sensing system signal molecule precursor. The chain is Putative AgrB-like protein from Lactiplantibacillus plantarum (strain ATCC BAA-793 / NCIMB 8826 / WCFS1) (Lactobacillus plantarum).